We begin with the raw amino-acid sequence, 1256 residues long: Octopamine receptor beta-3R (1256 aa).

Topologically, residues 1 to 143 (MSGVNVADLL…LDLSLLLLKG (143 aa)) are extracellular. 3 N-linked (GlcNAc...) asparagine glycosylation sites follow: Asn36, Asn113, and Asn117. A helical membrane pass occupies residues 144 to 164 (FIFSSIILAAVLGNALVIISV). The Cytoplasmic portion of the chain corresponds to 165-171 (QRNRKLR). A helical membrane pass occupies residues 172-192 (VITNYFVVSLAMADMLVALCA). The Extracellular portion of the chain corresponds to 193–213 (MTFNASVELSGGKWMFGPFMC). N-linked (GlcNAc...) asparagine glycosylation is present at Asn196. Residues 214–236 (NVYNSLDVYFSTASILHLCCISV) traverse the membrane as a helical segment. Over 237-258 (DRYYAIVRPLEYPLNMTHKTVC) the chain is Cytoplasmic. The chain crosses the membrane as a helical span at residues 259–279 (FMLANVWILPALISFTPIFLG). Topologically, residues 280–305 (WYTTEEHLREISLHPDQCSFVVNKAY) are extracellular. The chain crosses the membrane as a helical span at residues 306-326 (ALISSSVSFWIPGIVMLVMYW). At 327-1169 (RIFKEAIRQR…WKAEHKAART (843 aa)) the chain is on the cytoplasmic side. Disordered stretches follow at residues 377 to 427 (AREE…DLRD), 480 to 512 (ELDK…ESTA), 665 to 698 (LSHS…NKPD), 751 to 774 (GESP…EPSG), and 1087 to 1117 (DTTV…SSTR). The span at 396 to 406 (TDEDDDRDECD) shows a compositional bias: acidic residues. Over residues 489–498 (NGPQQQLSLT) the composition is skewed to polar residues. Pro residues predominate over residues 757-770 (PATPPPSLSPPELP). Residues 1170-1190 (LGIIMGVFLLCWLPFFLWYVI) traverse the membrane as a helical segment. The Extracellular portion of the chain corresponds to 1191-1202 (TSLCGPACPCPD). Residues 1203 to 1223 (VLVVVLFWIGYFNSTLNPLIY) traverse the membrane as a helical segment. At 1224 to 1256 (AYFNRDFREAFRNTLECVLPCLEKRNPYNAYYV) the chain is on the cytoplasmic side.

The protein belongs to the G-protein coupled receptor 1 family. In the adult, expressed in the inferior and superior protocerebrum, the posterior lateral protocerebrum, the deutocerebrum, the surface of the subesophageal ganglion, the lateral cell body region, the cortical layer of the ventral nerve cord and the optic lobe medulla of the central nervous system (CNS). Also expressed in the nurse cells and follicle cells of the egg chambers in the ovary at oogenic stages 1-10, and spermatogonia and spermatocytes in the testis. Expressed ubiquitously in the embryonic CNS. In larvae, expressed in the ventral cortical layer of the ventral nerve cord, the cortical layer of the brain lobes, salivary glands, midgut, imaginal disks and developing reproductive organs. Expressed in the larval prothoracic gland with weak expression in other regions of the ring gland.

The protein resides in the cell membrane. Functionally, autoreceptor for octopamine, which is a neurotransmitter, neurohormone, and neuromodulator in invertebrates. Probably also acts as a receptor for tyramine during ecdysone biosynthesis. Required for the biosynthesis of the steroid hormone ecdysone which is necessary for metamorphosis. Involved in activation of prothoracicotropic hormone and insulin-like peptide signaling which is required for the expression of ecdysone biosynthetic genes. This Drosophila melanogaster (Fruit fly) protein is Octopamine receptor beta-3R.